A 123-amino-acid chain; its full sequence is Ig heavy chain V region HPCM6 (123 aa).

Positions 1-114 constitute an Ig-like domain; it reads EVKLVESGGG…YPHWYFDVWG (114 aa).

The polypeptide is Ig heavy chain V region HPCM6 (Mus musculus (Mouse)).